The sequence spans 395 residues: NAD(P)H-quinone oxidoreductase subunit H (395 aa).

This sequence belongs to the complex I 49 kDa subunit family. As to quaternary structure, NDH-1 can be composed of about 15 different subunits; different subcomplexes with different compositions have been identified which probably have different functions.

It is found in the cellular thylakoid membrane. The catalysed reaction is a plastoquinone + NADH + (n+1) H(+)(in) = a plastoquinol + NAD(+) + n H(+)(out). It carries out the reaction a plastoquinone + NADPH + (n+1) H(+)(in) = a plastoquinol + NADP(+) + n H(+)(out). Its function is as follows. NDH-1 shuttles electrons from an unknown electron donor, via FMN and iron-sulfur (Fe-S) centers, to quinones in the respiratory and/or the photosynthetic chain. The immediate electron acceptor for the enzyme in this species is believed to be plastoquinone. Couples the redox reaction to proton translocation, and thus conserves the redox energy in a proton gradient. Cyanobacterial NDH-1 also plays a role in inorganic carbon-concentration. The chain is NAD(P)H-quinone oxidoreductase subunit H from Prochlorococcus marinus (strain MIT 9301).